The primary structure comprises 76 residues: CLAVATA3/ESR (CLE)-related protein 46 (76 aa).

The first 26 residues, 1–26 (MRRHDIIIKLLLLMCLLLSRFVTREC), serve as a signal peptide directing secretion. Residues 53-76 (EEKKWHKHPSGPNPTGNRHPPVKH) form a disordered region. Hydroxyproline is present on residues Pro-61 and Pro-64. The O-linked (Ara...) hydroxyproline glycan is linked to Pro-64.

Belongs to the CLV3/ESR signal peptide family. Post-translationally, the O-glycosylation (arabinosylation) of the hydroxyproline Pro-64 enhances binding affinity of the CLE46p peptide for its receptor.

The protein localises to the secreted. The protein resides in the extracellular space. Its function is as follows. Extracellular signal peptide that regulates cell fate. The polypeptide is CLAVATA3/ESR (CLE)-related protein 46 (Arabidopsis thaliana (Mouse-ear cress)).